The chain runs to 150 residues: UPF0178 protein PputW619_5044 (150 aa).

It belongs to the UPF0178 family.

The protein is UPF0178 protein PputW619_5044 of Pseudomonas putida (strain W619).